The primary structure comprises 33 residues: Beta-amanitin proprotein (33 aa).

Residues 1-10 (MSDINATRLP) constitute a propeptide that is removed on maturation. Positions 11–18 (IWGIGCDP) form a cross-link, cyclopeptide (Ile-Pro). A cross-link (2'-cysteinyl-6'-hydroxytryptophan sulfoxide (Trp-Cys)) is located at residues 12 to 16 (WGIGC). Positions 19-33 (CVGDEVTALLTRGEA) are excised as a propeptide.

It belongs to the MSDIN fungal toxin family. Processed by the macrocyclase-peptidase enzyme POPB to yield a toxic cyclic decapeptide. POPB first removes 10 residues from the N-terminus. Conformational trapping of the remaining peptide forces the enzyme to release this intermediate rather than proceed to macrocyclization. The enzyme rebinds the remaining peptide in a different conformation and catalyzes macrocyclization of the N-terminal 8 residues.

Functionally, toxin belonging to the bicyclic octapeptides amatoxins that acts by binding non-competitively to RNA polymerase II and greatly slowing the elongation of transcripts from target promoters. The protein is Beta-amanitin proprotein of Amanita fuligineoides.